We begin with the raw amino-acid sequence, 167 residues long: Putative 4-hydroxy-4-methyl-2-oxoglutarate aldolase (167 aa).

Substrate is bound by residues 81–84 and Arg-103; that span reads GDII. Asp-104 is an a divalent metal cation binding site.

Belongs to the class II aldolase/RraA-like family. Homotrimer. The cofactor is a divalent metal cation.

The enzyme catalyses 4-hydroxy-4-methyl-2-oxoglutarate = 2 pyruvate. The catalysed reaction is oxaloacetate + H(+) = pyruvate + CO2. Functionally, catalyzes the aldol cleavage of 4-hydroxy-4-methyl-2-oxoglutarate (HMG) into 2 molecules of pyruvate. Also contains a secondary oxaloacetate (OAA) decarboxylase activity due to the common pyruvate enolate transition state formed following C-C bond cleavage in the retro-aldol and decarboxylation reactions. The polypeptide is Putative 4-hydroxy-4-methyl-2-oxoglutarate aldolase (Corynebacterium jeikeium (strain K411)).